Consider the following 307-residue polypeptide: Aspartate carbamoyltransferase catalytic subunit (307 aa).

Carbamoyl phosphate contacts are provided by R58 and T59. K86 is a binding site for L-aspartate. 3 residues coordinate carbamoyl phosphate: R108, H136, and Q139. R169 and R223 together coordinate L-aspartate. Carbamoyl phosphate contacts are provided by G264 and P265.

It belongs to the aspartate/ornithine carbamoyltransferase superfamily. ATCase family. Heterododecamer (2C3:3R2) of six catalytic PyrB chains organized as two trimers (C3), and six regulatory PyrI chains organized as three dimers (R2).

The catalysed reaction is carbamoyl phosphate + L-aspartate = N-carbamoyl-L-aspartate + phosphate + H(+). The protein operates within pyrimidine metabolism; UMP biosynthesis via de novo pathway; (S)-dihydroorotate from bicarbonate: step 2/3. In terms of biological role, catalyzes the condensation of carbamoyl phosphate and aspartate to form carbamoyl aspartate and inorganic phosphate, the committed step in the de novo pyrimidine nucleotide biosynthesis pathway. The polypeptide is Aspartate carbamoyltransferase catalytic subunit (Moorella thermoacetica (strain ATCC 39073 / JCM 9320)).